Consider the following 204-residue polypeptide: Large ribosomal subunit protein uL13 (204 aa).

The protein belongs to the universal ribosomal protein uL13 family.

The protein is Large ribosomal subunit protein uL13 (RpL13A) of Spodoptera frugiperda (Fall armyworm).